The following is a 350-amino-acid chain: Casein kinase II subunit alpha' (350 aa).

Position 13 is a phosphotyrosine (Tyr-13). A phosphoserine mark is found at Ser-18 and Ser-21. The Protein kinase domain occupies 40–325; sequence YQLVRKLGRG…AKEAMEHPYF (286 aa). ATP contacts are provided by residues 46 to 54 and Lys-69; that span reads LGRGKYSEV. At Lys-97 the chain carries N6-acetyllysine. Asp-157 serves as the catalytic Proton acceptor. The residue at position 288 (Ser-288) is a Phosphoserine.

The protein belongs to the protein kinase superfamily. Ser/Thr protein kinase family. CK2 subfamily. Heterotetramer composed of two catalytic subunits (alpha chain and/or alpha' chain) and two regulatory subunits (beta chains). The tetramer can exist as a combination of 2 alpha/2 beta, 2 alpha'/2 beta or 1 alpha/1 alpha'/2 beta subunits. Also part of a CK2-SPT16-SSRP1 complex composed of SSRP1, SUPT16H, CSNK2A1, CSNK2A2 and CSNK2B, which forms following UV irradiation. Interacts with RNPS1. Interacts with CSNK2A2IP (via C-terminus). Interacts with SIRT6; preventing CSNK2A2 localization to the nucleus. Interacts with HIRIP3. As to expression, highly expressed in brain, testis and mature epididymal spermatozoa. Weakly expressed in kidney, liver, lung, spleen and thymus (at protein level).

The protein resides in the nucleus. It is found in the cytoplasm. It carries out the reaction L-seryl-[protein] + ATP = O-phospho-L-seryl-[protein] + ADP + H(+). The enzyme catalyses L-threonyl-[protein] + ATP = O-phospho-L-threonyl-[protein] + ADP + H(+). With respect to regulation, constitutively active protein kinase whose activity is not directly affected by phosphorylation. Seems to be regulated by level of expression and localization. Its function is as follows. Catalytic subunit of a constitutively active serine/threonine-protein kinase complex that phosphorylates a large number of substrates containing acidic residues C-terminal to the phosphorylated serine or threonine. Regulates numerous cellular processes, such as cell cycle progression, apoptosis and transcription, as well as viral infection. May act as a regulatory node which integrates and coordinates numerous signals leading to an appropriate cellular response. During mitosis, functions as a component of the p53/TP53-dependent spindle assembly checkpoint (SAC) that maintains cyclin-B-CDK1 activity and G2 arrest in response to spindle damage. Also required for p53/TP53-mediated apoptosis, phosphorylating 'Ser-392' of p53/TP53 following UV irradiation. Phosphorylates a number of DNA repair proteins in response to DNA damage, such as MDC1, RAD9A, RAD51 and HTATSF1, promoting their recruitment to DNA damage sites. Can also negatively regulate apoptosis. Phosphorylates the caspases CASP9 and CASP2 and the apoptotic regulator NOL3. Phosphorylation protects CASP9 from cleavage and activation by CASP8, and inhibits the dimerization of CASP2 and activation of CASP8. Regulates transcription by direct phosphorylation of RNA polymerases I, II, III and IV. Also phosphorylates and regulates numerous transcription factors including NF-kappa-B, STAT1, CREB1, IRF1, IRF2, ATF1, SRF, MAX, JUN, FOS, MYC and MYB. Phosphorylates Hsp90 and its co-chaperones FKBP4 and CDC37, which is essential for chaperone function. Regulates Wnt signaling by phosphorylating CTNNB1 and the transcription factor LEF1. Acts as an ectokinase that phosphorylates several extracellular proteins. May phosphorylate histone H2A on 'Ser-1'. The polypeptide is Casein kinase II subunit alpha' (Csnk2a2) (Mus musculus (Mouse)).